A 193-amino-acid chain; its full sequence is CRIB domain-containing protein RIC5 (193 aa).

Residues 29-42 form the CRIB domain; sequence IGIPTDVKHVAHIG. The segment at 42-193 is disordered; that stretch reads GWEGPSATTP…CAGLGSSTGR (152 aa). Basic and acidic residues predominate over residues 55–67; the sequence is HDFKPTDQTKTET. Positions 90–100 are enriched in polar residues; it reads STGNNSPTESP. Positions 123–134 are enriched in low complexity; sequence GSGSESGSGLEL.

In terms of assembly, interacts with ARAC11/ROP1. As to expression, expressed in flowers and pollen.

It localises to the cell membrane. Functions as a downstream effector of Rho-related GTP binding proteins of the 'Rho of Plants' (ROPs) family. Participates in the propagation of ROP GTPase signals in specific cellular responses. Is involved in pollen tube growth regulation through its interaction with ARAC11/ROP1. In Arabidopsis thaliana (Mouse-ear cress), this protein is CRIB domain-containing protein RIC5 (RIC5).